Consider the following 530-residue polypeptide: MSRSSPRALPPGALPRPLPAAPAAVQRALLPPWPRRAGRRWPASPLGMKVFRRKALVLCAGYALLLVLTMLNLLDYKWHKEPLQQCNPDGPLGAAVGAAGAGWGRPGSPPAAPPRAHSRMDPRTPYRPPAAGVGAVPAAAAGSAGAAASLGNATRGTRGGGDKRQLVYVFTTWRSGSSFFGELFNQNPEVFFLYEPVWHVWQKLYPGDAVSLQGAARDMLSALYRCDLSVFQLYSPAGSGGRNLTTLGIFGAATNKVVCSSPLCPAYRKEVVGLVDDRVCKKCPPQRLARFEEECRKYRTLVIKGVRVFDVAVLAPLLKDPALDLKVIHLVRDPRAVASSRIRSRHGLIRESLQVVRSRDPRAHRMPFLEAAGHKLGAKKEGMGGPADYHALGAMEVICNSMAKTLQTALQPPDWLQGHYLVVRYEDLVGDPVKTLRRVYDFVGLLVSPEMEQFALNMTSGSGSSSKPFVVSARNATQAANAWRTALTFQQIKQVEEFCYQPMAVLGYERVNSPEEVKDLSKTLLRKPRL.

The disordered stretch occupies residues 1–20; that stretch reads MSRSSPRALPPGALPRPLPA. Over 1–54 the chain is Cytoplasmic; it reads MSRSSPRALPPGALPRPLPAAPAAVQRALLPPWPRRAGRRWPASPLGMKVFRRK. Over residues 8–20 the composition is skewed to pro residues; it reads ALPPGALPRPLPA. Residues 55 to 75 form a helical; Signal-anchor for type II membrane protein membrane-spanning segment; sequence ALVLCAGYALLLVLTMLNLLD. Residues 76–530 are Lumenal-facing; it reads YKWHKEPLQQ…SKTLLRKPRL (455 aa). Residues 97 to 128 form a disordered region; it reads GAAGAGWGRPGSPPAAPPRAHSRMDPRTPYRP. Residue 173–179 coordinates 3'-phosphoadenylyl sulfate; the sequence is WRSGSSF. N243 carries an N-linked (GlcNAc...) asparagine glycan. 332-340 contacts 3'-phosphoadenylyl sulfate; that stretch reads RDPRAVASS. N-linked (GlcNAc...) asparagine glycosylation is found at N457 and N475.

It belongs to the sulfotransferase 1 family. Gal/GlcNAc/GalNAc subfamily. As to quaternary structure, homodimer; disulfide-linked. Homodimerization is not essential for enzyme activity. In brain, it is expressed in pyramidal cells in the CA3 subregion of the hippocampus, cerebellar nucleus and Purkinje cells. Expressed in peripheral lymph nodes.

The protein localises to the golgi apparatus. It localises to the trans-Golgi network membrane. The catalysed reaction is 3-O-{N-acetyl-beta-D-glucosaminyl-(1-&gt;3)-beta-D-galactosyl-(1-&gt;3)-N-acetyl-alpha-D-galactosaminyl}-L-threonyl-[protein] + 3'-phosphoadenylyl sulfate = 3-O-{6-O-sulfo-N-acetyl-beta-D-glucosaminyl-(1-&gt;3)-beta-D-galactosyl-(1-&gt;3)-N-acetyl-alpha-D-galactosaminyl}-L-threonyl-[protein] + adenosine 3',5'-bisphosphate + H(+). It carries out the reaction 3-O-{N-acetyl-beta-D-glucosaminyl-(1-&gt;3)-beta-D-galactosyl-(1-&gt;3)-N-acetyl-alpha-D-galactosaminyl}-L-seryl-[protein] + 3'-phosphoadenylyl sulfate = 3-O-{6-O-sulfo-N-acetyl-beta-D-glucosaminyl-(1-&gt;3)-beta-D-galactosyl-(1-&gt;3)-N-acetyl-alpha-D-galactosaminyl}-L-seryl-[protein] + adenosine 3',5'-bisphosphate + H(+). It catalyses the reaction a 3-O-{beta-D-galactosyl-(1-&gt;3)-[N-acetyl-beta-D-glucosaminyl-(1-&gt;6)]-N-acetyl-alpha-D-galactosaminyl}-L-threonyl-[protein] + 3'-phosphoadenylyl sulfate = 3-O-{beta-D-galactosyl-(1-&gt;3)-[6-O-sulfo-N-acetyl-beta-D-glucosaminyl-(1-&gt;6)]-N-acetyl-alpha-D-galactosaminyl}-L-threonyl-[protein] + adenosine 3',5'-bisphosphate + H(+). The enzyme catalyses 3-O-{beta-D-galactosyl-(1-&gt;3)-[N-acetyl-beta-D-glucosaminyl-(1-&gt;6)]-N-acetyl-alpha-D-galactosaminyl}-L-seryl-[protein] + 3'-phosphoadenylyl sulfate = 3-O-{beta-D-galactosyl-(1-&gt;3)-[6-O-sulfo-N-acetyl-beta-D-glucosaminyl-(1-&gt;6)]-N-acetyl-alpha-D-galactosaminyl}-L-seryl-[protein] + adenosine 3',5'-bisphosphate + H(+). It participates in protein modification; carbohydrate sulfation. Sulfotransferase that utilizes 3'-phospho-5'-adenylyl sulfate (PAPS) as sulfonate donor to catalyze the transfer of sulfate to position 6 of non-reducing N-acetylglucosamine (GlcNAc) residues within keratan-like structures on N-linked glycans and within mucin-associated glycans that can ultimately serve as SELL ligands. SELL ligands are present in high endothelial cells (HEVs) and play a central role in lymphocyte homing at sites of inflammation. Participates in biosynthesis of the SELL ligand sialyl 6-sulfo Lewis X and in lymphocyte homing to Peyer patches. Has no activity toward O-linked sugars. Its substrate specificity may be influenced by its subcellular location. Sulfates GlcNAc residues at terminal, non-reducing ends of oligosaccharide chains. In Mus musculus (Mouse), this protein is Carbohydrate sulfotransferase 2 (Chst2).